The sequence spans 404 residues: Cysteine desulfurase IscS (404 aa).

Pyridoxal 5'-phosphate-binding positions include 75–76, Asn155, Gln183, and 203–205; these read AT and SAH. Lys206 carries the post-translational modification N6-(pyridoxal phosphate)lysine. Thr243 contacts pyridoxal 5'-phosphate. The active-site Cysteine persulfide intermediate is Cys328. Cys328 contacts [2Fe-2S] cluster.

It belongs to the class-V pyridoxal-phosphate-dependent aminotransferase family. NifS/IscS subfamily. In terms of assembly, homodimer. Forms a heterotetramer with IscU, interacts with other sulfur acceptors. The cofactor is pyridoxal 5'-phosphate.

The protein localises to the cytoplasm. The catalysed reaction is (sulfur carrier)-H + L-cysteine = (sulfur carrier)-SH + L-alanine. It functions in the pathway cofactor biosynthesis; iron-sulfur cluster biosynthesis. Functionally, master enzyme that delivers sulfur to a number of partners involved in Fe-S cluster assembly, tRNA modification or cofactor biosynthesis. Catalyzes the removal of elemental sulfur atoms from cysteine to produce alanine. Functions as a sulfur delivery protein for Fe-S cluster synthesis onto IscU, an Fe-S scaffold assembly protein, as well as other S acceptor proteins. This Stutzerimonas stutzeri (strain A1501) (Pseudomonas stutzeri) protein is Cysteine desulfurase IscS.